The following is a 233-amino-acid chain: Enolase-phosphatase E1 (233 aa).

It belongs to the HAD-like hydrolase superfamily. MasA/MtnC family. Monomer. It depends on Mg(2+) as a cofactor.

It carries out the reaction 5-methylsulfanyl-2,3-dioxopentyl phosphate + H2O = 1,2-dihydroxy-5-(methylsulfanyl)pent-1-en-3-one + phosphate. It participates in amino-acid biosynthesis; L-methionine biosynthesis via salvage pathway; L-methionine from S-methyl-5-thio-alpha-D-ribose 1-phosphate: step 3/6. Its pathway is amino-acid biosynthesis; L-methionine biosynthesis via salvage pathway; L-methionine from S-methyl-5-thio-alpha-D-ribose 1-phosphate: step 4/6. Its function is as follows. Bifunctional enzyme that catalyzes the enolization of 2,3-diketo-5-methylthiopentyl-1-phosphate (DK-MTP-1-P) into the intermediate 2-hydroxy-3-keto-5-methylthiopentenyl-1-phosphate (HK-MTPenyl-1-P), which is then dephosphorylated to form the acireductone 1,2-dihydroxy-3-keto-5-methylthiopentene (DHK-MTPene). This is Enolase-phosphatase E1 from Hahella chejuensis (strain KCTC 2396).